Consider the following 631-residue polypeptide: Pescadillo homolog (631 aa).

One can recognise a BRCT domain in the interval 321–414 (RLRNLFKGLK…QLLPTNKYFL (94 aa)). 2 disordered regions span residues 450–469 (HAQS…EDDT) and 489–569 (EYKK…MVKP). Phosphoserine occurs at positions 453 and 457. Composition is skewed to acidic residues over residues 454–469 (DDES…EDDT) and 499–524 (VNED…EELD). Positions 510–541 (FDGEQESDEEEEELDEKTKRLQEEKKKMSVQS) form a coiled coil. The segment covering 525–536 (EKTKRLQEEKKK) has biased composition (basic and acidic residues). Residues 543–552 (KVHKVNKRQL) show a composition bias toward basic residues. A compositionally biased stretch (basic and acidic residues) spans 553-562 (HKAEVDEHRL).

It belongs to the pescadillo family.

Its subcellular location is the nucleus. It localises to the nucleolus. It is found in the nucleoplasm. Functionally, required for maturation of ribosomal RNAs and formation of the large ribosomal subunit. This is Pescadillo homolog from Drosophila mojavensis (Fruit fly).